Reading from the N-terminus, the 384-residue chain is L-lactate dehydrogenase (384 aa).

An FMN hydroxy acid dehydrogenase domain is found at 1 to 380 (MIISSSNDYR…NESCLVEMNK (380 aa)). Position 24 (tyrosine 24) interacts with substrate. FMN contacts are provided by serine 106 and glutamine 127. Tyrosine 129 provides a ligand contact to substrate. An FMN-binding site is contributed by threonine 155. Arginine 164 contributes to the substrate binding site. Lysine 251 contributes to the FMN binding site. Histidine 275 (proton acceptor) is an active-site residue. Arginine 278 lines the substrate pocket. Residue 306-330 (DSGIRNGLDVVRMLALGADSVMLGR) coordinates FMN.

It belongs to the FMN-dependent alpha-hydroxy acid dehydrogenase family. FMN is required as a cofactor.

It localises to the cell inner membrane. It carries out the reaction (S)-lactate + A = pyruvate + AH2. Catalyzes the conversion of L-lactate to pyruvate. Is coupled to the respiratory chain. This Acinetobacter baylyi (strain ATCC 33305 / BD413 / ADP1) protein is L-lactate dehydrogenase.